The following is a 140-amino-acid chain: ATP synthase epsilon chain (140 aa).

It belongs to the ATPase epsilon chain family. In terms of assembly, F-type ATPases have 2 components, CF(1) - the catalytic core - and CF(0) - the membrane proton channel. CF(1) has five subunits: alpha(3), beta(3), gamma(1), delta(1), epsilon(1). CF(0) has three main subunits: a, b and c.

The protein resides in the cell membrane. Produces ATP from ADP in the presence of a proton gradient across the membrane. The polypeptide is ATP synthase epsilon chain (Dehalococcoides mccartyi (strain ATCC BAA-2100 / JCM 16839 / KCTC 5957 / BAV1)).